A 440-amino-acid chain; its full sequence is Proton extrusion protein PxcA (440 aa).

Transmembrane regions (helical) follow at residues phenylalanine 222–leucine 242, asparagine 316–valine 336, isoleucine 352–glycine 374, and phenylalanine 400–isoleucine 420.

It belongs to the CemA family.

It localises to the cell inner membrane. In terms of biological role, required for H(+) efflux immediately after light irradiation to form a rapid H(+) concentration gradient across the thylakoid membranes. Together with PxcL, contributes to transient H(+) uptake following dark to light transition. Involved in light-induced Na(+)-dependent proton extrusion. Also seems to be involved in CO(2) transport. This is Proton extrusion protein PxcA from Synechocystis sp. (strain ATCC 27184 / PCC 6803 / Kazusa).